Consider the following 115-residue polypeptide: Mobilization protein MbeC (115 aa).

To E.coli MbaC and MbkC. Homodimer. Interacts with MbeA and MbeB to form the relaxosome.

Functionally, required for efficient mobilization of ColE1 plasmid and is thus essential to promote the specific transfer of the plasmid during conjugation. Probably functions by inducing DNA bending, helping the MbeA relaxase to melt the DNA around the nic site and cleave the phosphodiester bond. Binds specifically double-stranded DNA (dsDNA) containing the ColE1 oriT but does not recognize the inverted repeat (IR). The chain is Mobilization protein MbeC (mbeC) from Escherichia coli.